We begin with the raw amino-acid sequence, 255 residues long: Large ribosomal subunit protein uL4 (255 aa).

The protein belongs to the universal ribosomal protein uL4 family. In terms of assembly, part of the 50S ribosomal subunit.

Its function is as follows. One of the primary rRNA binding proteins, this protein initially binds near the 5'-end of the 23S rRNA. It is important during the early stages of 50S assembly. It makes multiple contacts with different domains of the 23S rRNA in the assembled 50S subunit and ribosome. Forms part of the polypeptide exit tunnel. In Thermococcus gammatolerans (strain DSM 15229 / JCM 11827 / EJ3), this protein is Large ribosomal subunit protein uL4.